The chain runs to 238 residues: uncharacterized protein (238 aa).

The next 3 helical transmembrane spans lie at 75-95 (YAIFHIFLPFILTLLLYHNFY), 116-136 (IVLIFTYVMTVIIVYFSFSLI), and 172-192 (IQGLAHIILSLLLFILGLEVI). Positions 200-238 (DVEMSSMRGQAITTEPASDNTMAEETDCNTSKDVESGSN) are disordered. Residues 206 to 220 (MRGQAITTEPASDNT) show a composition bias toward polar residues. Residues 229–238 (TSKDVESGSN) show a composition bias toward basic and acidic residues.

The protein resides in the membrane. This is an uncharacterized protein from Schizosaccharomyces pombe (strain 972 / ATCC 24843) (Fission yeast).